Consider the following 254-residue polypeptide: 5'-nucleotidase SurE (254 aa).

A divalent metal cation-binding residues include D8, D9, S38, and N91.

Belongs to the SurE nucleotidase family. The cofactor is a divalent metal cation.

Its subcellular location is the cytoplasm. The catalysed reaction is a ribonucleoside 5'-phosphate + H2O = a ribonucleoside + phosphate. Nucleotidase that shows phosphatase activity on nucleoside 5'-monophosphates. The protein is 5'-nucleotidase SurE of Anaeromyxobacter sp. (strain Fw109-5).